A 319-amino-acid chain; its full sequence is Acetyl-coenzyme A carboxylase carboxyl transferase subunit alpha (319 aa).

In terms of domain architecture, CoA carboxyltransferase C-terminal spans 32–293; the sequence is NVDTEVRALE…KAVLLNELEA (262 aa).

This sequence belongs to the AccA family. Acetyl-CoA carboxylase is a heterohexamer composed of biotin carboxyl carrier protein (AccB), biotin carboxylase (AccC) and two subunits each of ACCase subunit alpha (AccA) and ACCase subunit beta (AccD).

It localises to the cytoplasm. The enzyme catalyses N(6)-carboxybiotinyl-L-lysyl-[protein] + acetyl-CoA = N(6)-biotinyl-L-lysyl-[protein] + malonyl-CoA. It participates in lipid metabolism; malonyl-CoA biosynthesis; malonyl-CoA from acetyl-CoA: step 1/1. Its function is as follows. Component of the acetyl coenzyme A carboxylase (ACC) complex. First, biotin carboxylase catalyzes the carboxylation of biotin on its carrier protein (BCCP) and then the CO(2) group is transferred by the carboxyltransferase to acetyl-CoA to form malonyl-CoA. The polypeptide is Acetyl-coenzyme A carboxylase carboxyl transferase subunit alpha (Xylella fastidiosa (strain M12)).